The chain runs to 233 residues: tRNA (guanine-N(1)-)-methyltransferase (233 aa).

S-adenosyl-L-methionine-binding positions include G113 and 133-138 (IGDYVL).

The protein belongs to the RNA methyltransferase TrmD family. Homodimer.

The protein localises to the cytoplasm. The enzyme catalyses guanosine(37) in tRNA + S-adenosyl-L-methionine = N(1)-methylguanosine(37) in tRNA + S-adenosyl-L-homocysteine + H(+). Functionally, specifically methylates guanosine-37 in various tRNAs. This Ruminiclostridium cellulolyticum (strain ATCC 35319 / DSM 5812 / JCM 6584 / H10) (Clostridium cellulolyticum) protein is tRNA (guanine-N(1)-)-methyltransferase.